Consider the following 345-residue polypeptide: Ryncolin-4 (345 aa).

A signal peptide spans 1 to 19; sequence MKPWAAFHLIFLVASSLEG. The tract at residues 48–118 is disordered; the sequence is ILQSQPGIPG…DKGDKGEDCN (71 aa). The Collagen-like domain maps to 57–114; the sequence is GIPGVPGTNGSEGLKGDPGPQGPPGIRGPDGIRGEAGPKGDKGDQGDKGDKGDKGDKG. The span at 86–116 shows a compositional bias: basic and acidic residues; the sequence is DGIRGEAGPKGDKGDQGDKGDKGDKGDKGED. Residues 121–339 form the Fibrinogen C-terminal domain; that stretch reads DCLPTEVRNC…YADMKIRPQK (219 aa). Cystine bridges form between C130–C158 and C282–C295.

It belongs to the ficolin lectin family. Veficolin subfamily. In terms of processing, hydroxylated, possibly at Pro-80. In terms of tissue distribution, expressed by the venom duct.

Its subcellular location is the secreted. Its function is as follows. Initiates complement activation and/or interferes in platelet aggregation and/or blood coagulation. The polypeptide is Ryncolin-4 (Cerberus rynchops (Dog-faced water snake)).